A 395-amino-acid polypeptide reads, in one-letter code: Chaperone protein DnaJ 1 (395 aa).

The region spanning 10–75 is the J domain; the sequence is DFYQELGVSS…AKRKEYDETR (66 aa). The segment at 164–242 adopts a CR-type zinc-finger fold; it reads GVAMPLRLTS…CKGTGVTTRT (79 aa). The Zn(2+) site is built by cysteine 177, cysteine 180, cysteine 194, cysteine 197, cysteine 216, cysteine 219, cysteine 230, and cysteine 233. CXXCXGXG motif repeat units follow at residues 177-184, 194-201, 216-223, and 230-237; these read CTNCHGSG, CPTCNGSG, CTDCRGSG, and CEECKGTG.

This sequence belongs to the DnaJ family. Homodimer. Zn(2+) is required as a cofactor.

It is found in the cytoplasm. Its function is as follows. Participates actively in the response to hyperosmotic and heat shock by preventing the aggregation of stress-denatured proteins and by disaggregating proteins, also in an autonomous, DnaK-independent fashion. Unfolded proteins bind initially to DnaJ; upon interaction with the DnaJ-bound protein, DnaK hydrolyzes its bound ATP, resulting in the formation of a stable complex. GrpE releases ADP from DnaK; ATP binding to DnaK triggers the release of the substrate protein, thus completing the reaction cycle. Several rounds of ATP-dependent interactions between DnaJ, DnaK and GrpE are required for fully efficient folding. Also involved, together with DnaK and GrpE, in the DNA replication of plasmids through activation of initiation proteins. This is Chaperone protein DnaJ 1 from Mycobacterium bovis (strain ATCC BAA-935 / AF2122/97).